A 112-amino-acid polypeptide reads, in one-letter code: UPF0251 protein MA_4245 (112 aa).

It belongs to the UPF0251 family.

This is UPF0251 protein MA_4245 from Methanosarcina acetivorans (strain ATCC 35395 / DSM 2834 / JCM 12185 / C2A).